Here is a 79-residue protein sequence, read N- to C-terminus: RNA-binding protein Hfq (79 aa).

Positions 10 to 69 (GPFLNALRKEHVPVSIYLVNGIKLQGNIESFDQYVVLLRNTVTQMVYKHAISTVVPARAV) constitute a Sm domain.

It belongs to the Hfq family. In terms of assembly, homohexamer.

RNA chaperone that binds small regulatory RNA (sRNAs) and mRNAs to facilitate mRNA translational regulation in response to envelope stress, environmental stress and changes in metabolite concentrations. Also binds with high specificity to tRNAs. In Cupriavidus necator (strain ATCC 17699 / DSM 428 / KCTC 22496 / NCIMB 10442 / H16 / Stanier 337) (Ralstonia eutropha), this protein is RNA-binding protein Hfq.